A 1093-amino-acid polypeptide reads, in one-letter code: Semaphorin-5B (1093 aa).

Residues 1-19 (MVVPGPLALSLLLSSLTLL) form the signal peptide. At 20-978 (VSHLSSSQDI…TSCGGFNLIH (959 aa)) the chain is on the extracellular side. Residues 45–495 (HPIVAFEDLK…LSDRVLRVPL (451 aa)) form the Sema domain. 2 N-linked (GlcNAc...) asparagine glycosylation sites follow: N59 and N95. 2 disulfides stabilise this stretch: C114–C124 and C141–C150. Residues N157, N178, and N287 are each glycosylated (N-linked (GlcNAc...) asparagine). 2 cysteine pairs are disulfide-bonded: C264–C367 and C288–C330. N-linked (GlcNAc...) asparagine glycosylation is found at N333, N378, N532, N539, N547, and N602. 7 TSP type-1 domains span residues 551 to 605 (DGGF…NCSR), 606 to 662 (NGAW…TPCP), 664 to 713 (PIFW…EACP), 721 to 776 (WTPW…ACDT), 795 to 850 (NGGW…QACP), 852 to 907 (RGAW…QACP), and 908 to 952 (EGWS…RPCP). Disulfide bonds link C618–C655, C622–C661, C633–C645, C676–C707, C680–C712, and C691–C697. An N-linked (GlcNAc...) asparagine glycan is attached at N728. Cystine bridges form between C807–C844, C811–C849, C822–C834, C864–C901, C868–C906, and C879–C891. N944 carries N-linked (GlcNAc...) asparagine glycosylation. Residues 979-999 (LIVTGVSCFLVSGLLTLAVYL) traverse the membrane as a helical segment. The Cytoplasmic portion of the chain corresponds to 1000-1093 (SCQHCQRQSQ…SPGQRCFPNS (94 aa)).

Belongs to the semaphorin family. As to expression, in adult, only detected in brain.

The protein localises to the membrane. In terms of biological role, may act as a positive axonal guidance cue. This Mus musculus (Mouse) protein is Semaphorin-5B (Sema5b).